The primary structure comprises 37 residues: Large ribosomal subunit protein bL36c (37 aa).

It belongs to the bacterial ribosomal protein bL36 family.

Its subcellular location is the plastid. It localises to the chloroplast. This Welwitschia mirabilis (Tree tumbo) protein is Large ribosomal subunit protein bL36c.